Reading from the N-terminus, the 720-residue chain is MAEKFESLMNIHGFDLGSRYMDLKPLGCGGNGLVFSAVDNDCDKRVAIKKIVLTDPQSVKHALREIKIIRRLDHDNIVKVFEILGPSGSQLTDDVGSLTELNSVYIVQEYMETDLANVLEQGPLLEEHARLFMYQLLRGLKYIHSANVLHRDLKPANLFINTEDLVLKIGDFGLARIMDPHYSHKGHLSEGLVTKWYRSPRLLLSPNNYTKAIDMWAAGCIFAEMLTGKTLFAGAHELEQMQLILDSIPVVHEEDRQELLSVIPVYIRNDMTEPHRPLTQLLPGISREALDFLEQILTFSPMDRLTAEEALSHPYMSIYSFPTDEPISSHPFHIEDEVDDILLMDETHSHIYNWERYHDCQFSEHDWPIHNNFDIDEVQLDPRALSDVTDEEEVQVDPRKYLDGDREKYLEDPAFDTSYSAEPCWQYPDHHENKYCDLECSHTCNYKTRSSPYLDNLVWRESEVNHYYEPKLIIDLSNWKEQSKEKSDKRGKSKCERNGLVKAQIALEEASQQLAERERGQGFDFDSFIAGTIQLSAQHQSADVVDKLNDLNSSVSQLELKSLISKSVSREKQEKGRANLAQLGALYQSSWDSQFVSGGEECFLISQFCCEVRKDEHAEKENTYTSYLDKFFSRKEDSEMLETEPVEEGKRGERGREAGLLSGGGEFLLSKQLESIGTPQFHSPVGSPLKSIQATLTPSAMKSSPQIPHKTYSSILKHLN.

Residue Met1 forms a Peptide (Met-Gly) (interchain with G-Cter in ubiquitin) linkage. A Protein kinase domain is found at 20-316 (YMDLKPLGCG…AEEALSHPYM (297 aa)). ATP-binding positions include 26-34 (LGCGGNGLV) and Lys49. Asp152 serves as the catalytic Proton acceptor. Ser189 is modified (phosphoserine; by PAK1, PAK2 and PAK3). The SEG motif motif lies at 189–191 (SEG). The FRIEDE motif signature appears at 332 to 337 (FHIEDE). Phosphoserine is present on residues Ser386, Ser554, and Ser556. The tract at residues 638–657 (SEMLETEPVEEGKRGERGRE) is disordered. The span at 647 to 657 (EEGKRGERGRE) shows a compositional bias: basic and acidic residues. Ser683 is modified (phosphoserine). Over residues 700–714 (AMKSSPQIPHKTYSS) the composition is skewed to polar residues. The segment at 700–720 (AMKSSPQIPHKTYSSILKHLN) is disordered.

The protein belongs to the protein kinase superfamily. CMGC Ser/Thr protein kinase family. MAP kinase subfamily. In terms of assembly, heterodimer with ERK4/MAPK4. Interacts with (via FRIEDE motif) MAPKAPK5. Interacts with UBE3A; this interaction may be indirect and mediated by HERC2, possibly via HERC2 interaction with NEURL4. Mg(2+) is required as a cofactor. Phosphorylated at Ser-189 by PAK1, PAK2 and PAK3 resulting in catalytic activation. Phosphorylated by MAPKAPK5 at other sites. Post-translationally, ubiquitination at Met-1 leads to degradation by the proteasome pathway.

It localises to the cytoplasm. The protein resides in the nucleus. The enzyme catalyses L-seryl-[protein] + ATP = O-phospho-L-seryl-[protein] + ADP + H(+). The catalysed reaction is L-threonyl-[protein] + ATP = O-phospho-L-threonyl-[protein] + ADP + H(+). With respect to regulation, activated by phosphorylation at Ser-189. In terms of biological role, atypical MAPK protein. Phosphorylates microtubule-associated protein 2 (MAP2) and MAPKAPK5. The precise role of the complex formed with MAPKAPK5 is still unclear, but the complex follows a complex set of phosphorylation events: upon interaction with atypical MAPKAPK5, ERK3/MAPK6 is phosphorylated at Ser-189 and then mediates phosphorylation and activation of MAPKAPK5, which in turn phosphorylates ERK3/MAPK6. May promote entry in the cell cycle. The protein is Mitogen-activated protein kinase 6 (Mapk6) of Mus musculus (Mouse).